A 131-amino-acid chain; its full sequence is Arsenate reductase 1 (131 aa).

Active-site nucleophile residues include C10, C82, and C89. Disulfide bonds link C10–C82 and C82–C89.

Belongs to the low molecular weight phosphotyrosine protein phosphatase family. Thioredoxin-coupled ArsC subfamily.

The protein localises to the cytoplasm. It carries out the reaction arsenate + [thioredoxin]-dithiol + H(+) = arsenite + [thioredoxin]-disulfide + H2O. Functionally, catalyzes the reduction of arsenate [As(V)] to arsenite [As(III)]. The chain is Arsenate reductase 1 from Staphylococcus saprophyticus subsp. saprophyticus (strain ATCC 15305 / DSM 20229 / NCIMB 8711 / NCTC 7292 / S-41).